The chain runs to 296 residues: tRNA dimethylallyltransferase (296 aa).

2 to 9 (GPTASGKT) contributes to the ATP binding site. 4-9 (TASGKT) is a substrate binding site. 3 interaction with substrate tRNA regions span residues 27-30 (DSAL), 151-155 (QRLSR), and 232-237 (RCVGYR).

Belongs to the IPP transferase family. Monomer. Requires Mg(2+) as cofactor.

It carries out the reaction adenosine(37) in tRNA + dimethylallyl diphosphate = N(6)-dimethylallyladenosine(37) in tRNA + diphosphate. Catalyzes the transfer of a dimethylallyl group onto the adenine at position 37 in tRNAs that read codons beginning with uridine, leading to the formation of N6-(dimethylallyl)adenosine (i(6)A). The chain is tRNA dimethylallyltransferase from Shewanella sp. (strain MR-7).